Here is a 108-residue protein sequence, read N- to C-terminus: Large ribosomal subunit protein uL23 (108 aa).

This sequence belongs to the universal ribosomal protein uL23 family. In terms of assembly, part of the 50S ribosomal subunit. Contacts protein L29, and trigger factor when it is bound to the ribosome.

One of the early assembly proteins it binds 23S rRNA. One of the proteins that surrounds the polypeptide exit tunnel on the outside of the ribosome. Forms the main docking site for trigger factor binding to the ribosome. This chain is Large ribosomal subunit protein uL23, found in Albidiferax ferrireducens (strain ATCC BAA-621 / DSM 15236 / T118) (Rhodoferax ferrireducens).